Reading from the N-terminus, the 124-residue chain is Small ribosomal subunit protein uS12c (124 aa).

Belongs to the universal ribosomal protein uS12 family. As to quaternary structure, part of the 30S ribosomal subunit.

The protein resides in the plastid. With S4 and S5 plays an important role in translational accuracy. Located at the interface of the 30S and 50S subunits. This chain is Small ribosomal subunit protein uS12c (rps12), found in Helicosporidium sp. subsp. Simulium jonesii (Green alga).